The primary structure comprises 1053 residues: Probable dihydropyrimidine dehydrogenase [NADP(+)] (1053 aa).

The 32-residue stretch at 84 to 115 (ERGALKEAMRCLKCADAPCQKSCPTQLDIKSF) folds into the 4Fe-4S ferredoxin-type 1 domain. Positions 94, 97, 102, 106, 145, 151, 155, and 171 each coordinate [4Fe-4S] cluster. Residues 207-211 (GCGPA), 231-239 (EKRAYIGGL), Arg-248, and Leu-274 contribute to the FAD site. NADP(+)-binding positions include 354 to 357 (AGDT), 378 to 379 (RK), Arg-385, 451 to 453 (AFG), and 495 to 501 (DVAGVAE). Position 494 to 503 (494 to 503 (GDVAGVAETT)) interacts with FAD. FMN contacts are provided by residues Ser-574 and 598-599 (KT). Residues Asn-633 and 692–694 (NLS) contribute to the substrate site. The active-site Proton acceptor is the Cys-695. Lys-733 lines the FMN pocket. Position 760–761 (760–761 (NT)) interacts with substrate. FMN contacts are provided by residues Gly-791, 817 to 819 (TGG), and 840 to 841 (CS). 4Fe-4S ferredoxin-type domains follow at residues 949–981 (EVAI…FDAV) and 983–1013 (HQPH…MVPR). [4Fe-4S] cluster is bound by residues Cys-958, Cys-961, Cys-964, Cys-968, Cys-992, Cys-995, Cys-998, and Cys-1002.

This sequence belongs to the dihydropyrimidine dehydrogenase family. The cofactor is [4Fe-4S] cluster. FAD is required as a cofactor. FMN serves as cofactor.

The catalysed reaction is 5,6-dihydrouracil + NADP(+) = uracil + NADPH + H(+). It participates in amino-acid biosynthesis; beta-alanine biosynthesis. Its function is as follows. Involved in pyrimidine base degradation. Catalyzes the reduction of uracil and thymine. Also involved the degradation of the chemotherapeutic drug 5-fluorouracil. The protein is Probable dihydropyrimidine dehydrogenase [NADP(+)] of Caenorhabditis briggsae.